A 202-amino-acid polypeptide reads, in one-letter code: Regulator of G-protein signaling 16 (202 aa).

Residues C2 and C12 are each lipidated (S-palmitoyl cysteine). An RGS domain is found at 65–181; it reads SFDLLLSSKN…LKSPAYRDLA (117 aa). Y168 carries the phosphotyrosine; by EGFR modification. At Y177 the chain carries Phosphotyrosine. The segment at 183 to 202 is disordered; the sequence is QATAASASPSSSSPAEPLHT.

As to quaternary structure, interacts with GNAI1 and GNAQ. Interacts with GNAI3, GNAI3 and GNAO1. Palmitoylated on Cys-2 and/or Cys-12. Post-translationally, phosphorylated. Phosphorylation at Tyr-168 by EGFR enhances GTPase accelerating (GAP) activity toward GNAI1.

Its subcellular location is the membrane. Its function is as follows. Regulates G protein-coupled receptor signaling cascades. Inhibits signal transduction by increasing the GTPase activity of G protein alpha subunits, thereby driving them into their inactive GDP-bound form. Plays an important role in the phototransduction cascade by regulating the lifetime and effective concentration of activated transducin alpha. May regulate extra and intracellular mitogenic signals. The sequence is that of Regulator of G-protein signaling 16 (RGS16) from Bos taurus (Bovine).